The following is a 119-amino-acid chain: FAD-linked sulfhydryl oxidase (119 aa).

The ERV/ALR sulfhydryl oxidase domain occupies 1–97 (MLHWGPKYWR…ISWSEYKNIY (97 aa)). C44 and C47 are oxidised to a cystine.

It belongs to the asfivirus B119L family. Interacts with A151R. Requires FAD as cofactor.

The protein resides in the host cytoplasm. It localises to the virion. It carries out the reaction 2 R'C(R)SH + O2 = R'C(R)S-S(R)CR' + H2O2. FAD-dependent sulfhydryl oxidase that catalyzes the formation of disulfide bonds in viral proteins produced in the cell cytoplasm. Involved in virion maturation. In African swine fever virus (isolate Warthog/Namibia/Wart80/1980) (ASFV), this protein is FAD-linked sulfhydryl oxidase.